The chain runs to 343 residues: Ribosomal RNA small subunit methyltransferase C (343 aa).

Belongs to the methyltransferase superfamily. RsmC family. As to quaternary structure, monomer.

It localises to the cytoplasm. It carries out the reaction guanosine(1207) in 16S rRNA + S-adenosyl-L-methionine = N(2)-methylguanosine(1207) in 16S rRNA + S-adenosyl-L-homocysteine + H(+). Specifically methylates the guanine in position 1207 of 16S rRNA in the 30S particle. The protein is Ribosomal RNA small subunit methyltransferase C of Shigella flexneri.